Consider the following 67-residue polypeptide: Neurotoxin Cex10 (67 aa).

The 65-residue stretch at K1–G65 folds into the LCN-type CS-alpha/beta domain. 4 disulfides stabilise this stretch: C11-C64, C15-C40, C24-C45, and C28-C47. C64 carries the post-translational modification Cysteine amide. A propeptide spanning residues G65–K67 is cleaved from the precursor.

This sequence belongs to the long (4 C-C) scorpion toxin superfamily. Sodium channel inhibitor family. Beta subfamily. In terms of tissue distribution, expressed by the venom gland.

It is found in the secreted. Functionally, beta toxins bind voltage-independently at site-4 of sodium channels (Nav) and shift the voltage of activation toward more negative potentials thereby affecting sodium channel activation and promoting spontaneous and repetitive firing. The sequence is that of Neurotoxin Cex10 from Centruroides exilicauda (Bark scorpion).